A 717-amino-acid polypeptide reads, in one-letter code: Ubiquitin carboxyl-terminal hydrolase 11 (717 aa).

The disordered stretch occupies residues 231 to 268; it reads ATAPPVHSLEVSSQIRDSSQDSSSSLSKVEKPKEEEGK. Low complexity predominate over residues 242–257; the sequence is SSQIRDSSQDSSSSLS. Residues 258-268 show a composition bias toward basic and acidic residues; that stretch reads KVEKPKEEEGK. The USP domain occupies 298–707; sequence TGLQNPCNTC…EVYVLFYERM (410 aa). Cysteine 307 serves as the catalytic Nucleophile. The interval 531–577 is disordered; the sequence is KKEEITSQKKKSTIFGFHSRSRSKSPHHHHHHHHSSDDSTKNAKKRN. A compositionally biased stretch (basic residues) spans 549 to 564; it reads SRSRSKSPHHHHHHHH. Histidine 649 (proton acceptor) is an active-site residue.

It belongs to the peptidase C19 family.

It carries out the reaction Thiol-dependent hydrolysis of ester, thioester, amide, peptide and isopeptide bonds formed by the C-terminal Gly of ubiquitin (a 76-residue protein attached to proteins as an intracellular targeting signal).. This Saccharomyces cerevisiae (strain ATCC 204508 / S288c) (Baker's yeast) protein is Ubiquitin carboxyl-terminal hydrolase 11 (UBP11).